The chain runs to 292 residues: uncharacterized protein (292 aa).

The protein resides in the virion. This is an uncharacterized protein from Acanthamoeba polyphaga (Amoeba).